Reading from the N-terminus, the 393-residue chain is Acetylornithine aminotransferase (393 aa).

Residues 95–96 and Phe127 each bind pyridoxal 5'-phosphate; that span reads GA. Arg130 is a N(2)-acetyl-L-ornithine binding site. Position 214 to 217 (214 to 217) interacts with pyridoxal 5'-phosphate; that stretch reads DEVQ. Lys243 carries the N6-(pyridoxal phosphate)lysine modification. Ser271 is a binding site for N(2)-acetyl-L-ornithine. Thr272 contributes to the pyridoxal 5'-phosphate binding site.

This sequence belongs to the class-III pyridoxal-phosphate-dependent aminotransferase family. ArgD subfamily. In terms of assembly, homodimer. The cofactor is pyridoxal 5'-phosphate.

Its subcellular location is the cytoplasm. The catalysed reaction is N(2)-acetyl-L-ornithine + 2-oxoglutarate = N-acetyl-L-glutamate 5-semialdehyde + L-glutamate. It participates in amino-acid biosynthesis; L-arginine biosynthesis; N(2)-acetyl-L-ornithine from L-glutamate: step 4/4. This chain is Acetylornithine aminotransferase, found in Nitrosomonas europaea (strain ATCC 19718 / CIP 103999 / KCTC 2705 / NBRC 14298).